Here is a 422-residue protein sequence, read N- to C-terminus: Histidinol dehydrogenase (422 aa).

NAD(+)-binding residues include tyrosine 123, glutamine 183, and asparagine 206. The substrate site is built by serine 229, glutamine 251, and histidine 254. Residues glutamine 251 and histidine 254 each contribute to the Zn(2+) site. Active-site proton acceptor residues include glutamate 320 and histidine 321. Residues histidine 321, aspartate 354, glutamate 408, and histidine 413 each contribute to the substrate site. A Zn(2+)-binding site is contributed by aspartate 354. Zn(2+) is bound at residue histidine 413.

The protein belongs to the histidinol dehydrogenase family. Zn(2+) serves as cofactor.

The enzyme catalyses L-histidinol + 2 NAD(+) + H2O = L-histidine + 2 NADH + 3 H(+). Its pathway is amino-acid biosynthesis; L-histidine biosynthesis; L-histidine from 5-phospho-alpha-D-ribose 1-diphosphate: step 9/9. Catalyzes the sequential NAD-dependent oxidations of L-histidinol to L-histidinaldehyde and then to L-histidine. This is Histidinol dehydrogenase from Haloarcula marismortui (strain ATCC 43049 / DSM 3752 / JCM 8966 / VKM B-1809) (Halobacterium marismortui).